We begin with the raw amino-acid sequence, 80 residues long: Large ribosomal subunit protein uL29 (80 aa).

This sequence belongs to the universal ribosomal protein uL29 family.

This Saccharopolyspora erythraea (strain ATCC 11635 / DSM 40517 / JCM 4748 / NBRC 13426 / NCIMB 8594 / NRRL 2338) protein is Large ribosomal subunit protein uL29.